Reading from the N-terminus, the 131-residue chain is ATP synthase epsilon chain (131 aa).

It belongs to the ATPase epsilon chain family. As to quaternary structure, F-type ATPases have 2 components, CF(1) - the catalytic core - and CF(0) - the membrane proton channel. CF(1) has five subunits: alpha(3), beta(3), gamma(1), delta(1), epsilon(1). CF(0) has three main subunits: a, b and c.

The protein resides in the cell membrane. Functionally, produces ATP from ADP in the presence of a proton gradient across the membrane. The sequence is that of ATP synthase epsilon chain from Clostridium novyi (strain NT).